Here is a 347-residue protein sequence, read N- to C-terminus: Dual specificity mitogen-activated protein kinase kinase 3 (347 aa).

At methionine 1 the chain carries N-acetylmethionine. The span at methionine 1–serine 11 shows a compositional bias: pro residues. The disordered stretch occupies residues methionine 1–aspartate 45. The residue at position 3 (serine 3) is a Phosphoserine. Residues leucine 64–phenylalanine 325 enclose the Protein kinase domain. ATP-binding positions include leucine 70–valine 78 and lysine 93. The Proton acceptor role is filled by aspartate 190. Serine 218 bears the Phosphoserine mark. Threonine 222 carries the phosphothreonine modification.

The protein belongs to the protein kinase superfamily. STE Ser/Thr protein kinase family. MAP kinase kinase subfamily. Component of a signaling complex containing at least AKAP13, PKN1, MAPK14, ZAK and MAP2K3. Within this complex, AKAP13 interacts directly with PKN1, which in turn recruits MAPK14, MAP2K3 and ZAK. Binds to DYRK1B/MIRK and increases its kinase activity. Part of a complex with MAP3K3, RAC1 and CCM2. Interacts with ARRB1. Post-translationally, autophosphorylated. Phosphorylation on Ser-218 and Thr-222 by MAP kinase kinase kinases positively regulates the kinase activity. Phosphorylated by TAOK2.

The catalysed reaction is L-seryl-[protein] + ATP = O-phospho-L-seryl-[protein] + ADP + H(+). The enzyme catalyses L-threonyl-[protein] + ATP = O-phospho-L-threonyl-[protein] + ADP + H(+). It catalyses the reaction L-tyrosyl-[protein] + ATP = O-phospho-L-tyrosyl-[protein] + ADP + H(+). Activated by dual phosphorylation on Ser-218 and Thr-222. Its function is as follows. Dual specificity kinase. Is activated by cytokines and environmental stress in vivo. Catalyzes the concomitant phosphorylation of a threonine and a tyrosine residue in the MAP kinase p38. Part of a signaling cascade that begins with the activation of the adrenergic receptor ADRA1B and leads to the activation of MAPK14. This Mus musculus (Mouse) protein is Dual specificity mitogen-activated protein kinase kinase 3 (Map2k3).